The sequence spans 478 residues: Noelin-3 (478 aa).

Positions 1–23 are cleaved as a signal peptide; sequence MSAPLLKLGAVLSTMAMISNWMS. Asparagine 33, asparagine 95, asparagine 179, asparagine 299, and asparagine 465 each carry an N-linked (GlcNAc...) asparagine glycan. Positions 77–217 form a coiled coil; it reads CSRDAKSRQL…TRLRDCMKKL (141 aa). Residues 218–470 enclose the Olfactomedin-like domain; that stretch reads TCGKLMKITG…QVLFNVTLFH (253 aa). Cysteine 219 and cysteine 401 are disulfide-bonded.

Peripherally associated with AMPAR complex. AMPAR complex consists of an inner core made of 4 pore-forming GluA/GRIA proteins (GRIA1, GRIA2, GRIA3 and GRIA4) and 4 major auxiliary subunits arranged in a twofold symmetry. One of the two pairs of distinct binding sites is occupied either by CNIH2, CNIH3 or CACNG2, CACNG3. The other harbors CACNG2, CACNG3, CACNG4, CACNG8 or GSG1L. This inner core of AMPAR complex is complemented by outer core constituents binding directly to the GluA/GRIA proteins at sites distinct from the interaction sites of the inner core constituents. Outer core constituents include at least PRRT1, PRRT2, CKAMP44/SHISA9, FRRS1L and NRN1. The proteins of the inner and outer core serve as a platform for other, more peripherally associated AMPAR constituents, including OLFM3. Alone or in combination, these auxiliary subunits control the gating and pharmacology of the AMPAR complex and profoundly impact their biogenesis and protein processing. Homodimer. Interacts with MYOC. Interacts with OLFM2. As to expression, expressed in the brain (at protein level). Also expressed in the retina, mainly in the ganglion cell layer and in the amacrine cell subregion of the inner nuclear layer. Expressed at high levels in the epithelial cells of the posterior iris and the ciliary body and, at lower levels, in the trabecular meshwork. Isoform 2 preferentially expressed in retina and brain, while isoform 1 preferentially expressed in the tissues of the eye angle.

It localises to the secreted. The protein localises to the synapse. The polypeptide is Noelin-3 (Olfm3) (Rattus norvegicus (Rat)).